A 475-amino-acid polypeptide reads, in one-letter code: MSPKTETKASVGFKAGVKDYRLTYYTPEYQTKDTDILAAFRVTPQPGVPPEEAGAAVAAESSTGTWTTVWTDGLTSLDRYKGRCYDIEPVAGEETQFIAYVAYPLDLFEEGSVTNLFTSIVGNVFGFKALRALRLEDLRIPPAYSKTFQGPPHGIQVERDKLNKYGRPLLGCTIKPKLGLSAKNYGRAVYECLRGGLDFTKDDENVNSQPFMRWRDRFVFCAEAIYKAQAETGEIKGHYLNATAGTCEEMMKRAIFARELGVPIVMHDYLTGGFTANTSLAHYCRDNGLLLHIHRAMHAVIDRQRIHGMHFRVLAKALRMSGGDHIHAGTVVGKLEGERDVTLGFVDLLRDDFIEKDRSRGIYFTQDWVSMPGVLPVASGGIHVWHMPALTEIFGDDSVLQFGGGTLGHPWGNAPGAVANRVALEACVQARNEGRDLAREGNEVIREACKWSPELAAACEIWKEIKFEFDVIDRL.

Positions 1–2 are excised as a propeptide; that stretch reads MS. An N-acetylproline modification is found at Pro-3. Position 14 is an N6,N6,N6-trimethyllysine (Lys-14). Positions 123 and 173 each coordinate substrate. Lys-175 serves as the catalytic Proton acceptor. Lys-177 contacts substrate. Residues Lys-201, Asp-203, and Glu-204 each coordinate Mg(2+). N6-carboxylysine is present on Lys-201. The active-site Proton acceptor is the His-294. The substrate site is built by Arg-295, His-327, and Ser-379.

The protein belongs to the RuBisCO large chain family. Type I subfamily. As to quaternary structure, heterohexadecamer of 8 large chains and 8 small chains; disulfide-linked. The disulfide link is formed within the large subunit homodimers. Mg(2+) is required as a cofactor. In terms of processing, the disulfide bond which can form in the large chain dimeric partners within the hexadecamer appears to be associated with oxidative stress and protein turnover.

The protein localises to the plastid. It is found in the chloroplast. It carries out the reaction 2 (2R)-3-phosphoglycerate + 2 H(+) = D-ribulose 1,5-bisphosphate + CO2 + H2O. The enzyme catalyses D-ribulose 1,5-bisphosphate + O2 = 2-phosphoglycolate + (2R)-3-phosphoglycerate + 2 H(+). Functionally, ruBisCO catalyzes two reactions: the carboxylation of D-ribulose 1,5-bisphosphate, the primary event in carbon dioxide fixation, as well as the oxidative fragmentation of the pentose substrate in the photorespiration process. Both reactions occur simultaneously and in competition at the same active site. The chain is Ribulose bisphosphate carboxylase large chain from Pinus radiata (Monterey pine).